We begin with the raw amino-acid sequence, 382 residues long: MRKRINLLREFSVPLIAGVVVALLWANLDPAGYHSFIEQPFFGGMSFHFVVNELFMVLFFGIAAVEITQSCLPGGDLNPLRKAVNPLLATLGGVVGPVLVYLGLNAIIGGPELTRGWGIPTATDIALAWLVARLVFGAGHPAVSFLLLLAVADDAIGLAIIAVFYPDPNHPTEPIWLFLTVAGMVVAYILRSLKSRSYWPYVVVGGGLAWTGLFKAHLHPALALVFIIPFLPHPSRETAHLFEADPRDTSTLARFEHDWKIVVDFGLFMFGLANAGVGFSSVGAATWLVLASLVIGKTLGIFAMGYVGRALGFPLPQQVGAKELAMTGLVAGIGLTVALFVAGVAFVEPDIQGSAKMGALLSGGVSIVAIMLGRALNVRRIP.

The next 10 helical transmembrane spans lie at 11-31 (FSVP…LDPA), 47-67 (FHFV…AVEI), 88-108 (LATL…NAII), 116-136 (GWGI…RLVF), 145-165 (FLLL…AVFY), 170-190 (HPTE…AYIL), 261-283 (IVVD…SSVG), 299-319 (LGIF…PQQV), 327-347 (TGLV…VAFV), and 353-373 (GSAK…IMLG).

This sequence belongs to the NhaA Na(+)/H(+) (TC 2.A.33) antiporter family.

Its subcellular location is the cell inner membrane. The enzyme catalyses Na(+)(in) + 2 H(+)(out) = Na(+)(out) + 2 H(+)(in). Its function is as follows. Na(+)/H(+) antiporter that extrudes sodium in exchange for external protons. This chain is Na(+)/H(+) antiporter NhaA, found in Geobacter sulfurreducens (strain ATCC 51573 / DSM 12127 / PCA).